A 432-amino-acid polypeptide reads, in one-letter code: Asparagine--tRNA ligase (432 aa).

Belongs to the class-II aminoacyl-tRNA synthetase family. In terms of assembly, homodimer.

The protein resides in the cytoplasm. The catalysed reaction is tRNA(Asn) + L-asparagine + ATP = L-asparaginyl-tRNA(Asn) + AMP + diphosphate + H(+). The polypeptide is Asparagine--tRNA ligase (Lactobacillus johnsonii (strain CNCM I-12250 / La1 / NCC 533)).